A 468-amino-acid polypeptide reads, in one-letter code: UDP-N-acetylmuramoyl-L-alanine--L-glutamate ligase (468 aa).

122 to 128 (GTKGKST) contributes to the ATP binding site.

Belongs to the MurCDEF family. MurD2 subfamily.

It is found in the cytoplasm. It catalyses the reaction UDP-N-acetyl-alpha-D-muramoyl-L-alanine + L-glutamate + ATP = UDP-N-acetyl-alpha-D-muramoyl-L-alanyl-L-glutamate + ADP + phosphate + H(+). It functions in the pathway cell wall biogenesis; peptidoglycan biosynthesis. In terms of biological role, cell wall formation. Catalyzes the addition of L-glutamate to the nucleotide precursor UDP-N-acetylmuramoyl-L-alanine. The chain is UDP-N-acetylmuramoyl-L-alanine--L-glutamate ligase from Xylella fastidiosa (strain 9a5c).